Consider the following 489-residue polypeptide: Metalloreductase STEAP2 (489 aa).

NADP(+) contacts are provided by residues 37–40 (SGDF), 59–60 (SR), 92–99 (IHREHYTS), N117, and A150. FAD is bound by residues W151 and D159. The helical transmembrane segment at 207–227 (LFTLWRGPVVVAISLATFFFL) threads the bilayer. Y228 is a binding site for Fe(3+). The chain crosses the membrane as a helical span at residues 258–278 (LPIVAITLLSLVYLAGLLAAA). In terms of domain architecture, Ferric oxidoreductase spans 258 to 406 (LPIVAITLLS…LGYVALLITT (149 aa)). Residues Q280 and R301 each contribute to the FAD site. Transmembrane regions (helical) follow at residues 304-324 (LGLL…CLPM), 358-378 (MYIS…VTSI), 392-412 (FIQS…VLIY), and 431-451 (FVLA…LLLP). Heme b is bound at residue H315. Y318 serves as a coordination point for Fe(3+). FAD-binding residues include S377 and Q394. H408 contributes to the heme b binding site. S482 bears the Phosphoserine mark.

The protein belongs to the STEAP family. The cofactor is FAD. It depends on heme b as a cofactor.

The protein resides in the cell membrane. Its subcellular location is the endosome membrane. The enzyme catalyses 2 Fe(2+) + NADP(+) + H(+) = 2 Fe(3+) + NADPH. It catalyses the reaction 2 Cu(+) + NADP(+) + H(+) = 2 Cu(2+) + NADPH. Functionally, integral membrane protein that functions as a NADPH-dependent ferric-chelate reductase, using NADPH from one side of the membrane to reduce a Fe(3+) chelate that is bound on the other side of the membrane. Mediates sequential transmembrane electron transfer from NADPH to FAD and onto heme, and finally to the Fe(3+) chelate. Can also reduce Cu(2+) to Cu(1+). In Mus musculus (Mouse), this protein is Metalloreductase STEAP2 (Steap2).